The following is a 117-amino-acid chain: Large-conductance mechanosensitive channel (117 aa).

3 helical membrane passes run 7 to 27 (EFALKGNVLDLAIAVVMGAAF), 30 to 50 (IVTSLVTYIIMPLIGKIFGSV), and 64 to 84 (GLFIQSIIDFIIVAIALFIFV).

The protein belongs to the MscL family. Homopentamer.

It localises to the cell membrane. Functionally, channel that opens in response to stretch forces in the membrane lipid bilayer. May participate in the regulation of osmotic pressure changes within the cell. The sequence is that of Large-conductance mechanosensitive channel from Staphylococcus haemolyticus (strain JCSC1435).